The chain runs to 1046 residues: UDP-N-acetylglucosamine--peptide N-acetylglucosaminyltransferase 110 kDa subunit (1046 aa).

The residue at position 2 (Ala2) is an N-acetylalanine. A phosphoserine; by GSK3-beta; alternate mark is found at Ser3 and Ser4. O-linked (GlcNAc) serine; alternate glycosylation is found at Ser3 and Ser4. Position 20 is a phosphoserine (Ser20). 12 TPR repeats span residues 21 to 54 (FQGLAELAHREYQAGDFEAAERHCMQLWRQEPDN), 89 to 122 (AEAYSNLGNVYKERGQLQEAIEHYRHALRLKPDF), 123 to 156 (IDGYINLAAALVAAGDMEGAVQAYVSALQYNPDL), 157 to 190 (YCVRSDLGNLLKALGRLEEAKACYLKAIETQPNF), 191 to 224 (AVAWSNLGCVFNAQGEIWLAIHHFEKAVTLDPNF), 225 to 258 (LDAYINLGNVLKEARIFDRAVAAYLRALSLSPNH), 259 to 292 (AVVHGNLACVYYEQGLIDLAIDTYRRAIELQPHF), 293 to 326 (PDAYCNLANALKEKGSVAEAEDCYNTALRLCPTH), 327 to 360 (ADSLNNLANIKREQGNIEEAVRLYRKALEVFPEF), 361 to 394 (AAAHSNLASVLQQQGKLQEALMHYKEAIRISPTF), 395 to 428 (ADAYSNMGNTLKEMQDVQGALQCYTRAIQINPAF), and 429 to 462 (ADAHSNLASIHKDSGNIPEAIASYRTALKLKPDF). Ser399 carries O-linked (GlcNAc) serine; by autocatalysis glycosylation. Thr454 bears the Phosphothreonine mark. Residues 463 to 473 (PDAYCNLAHCL) form a TPR 13; truncated repeat. The DFP motif signature appears at 464–466 (DAY). The Nuclear localization signal motif lies at 487–503 (KKLVSIVAEQLEKNRLP). His508 (proton acceptor) is an active-site residue. UDP is bound by residues Gln849, Lys852, 906–908 (APK), 911–914 (HVRR), 930–932 (HTT), and Asp935. Residue Tyr989 is modified to Phosphotyrosine. A required for phosphatidylinositol 3,4,5-triphosphate binding region spans residues 991-1010 (KKIRGKVWKQRISSPLFNTK).

This sequence belongs to the glycosyltransferase 41 family. O-GlcNAc transferase subfamily. Monomer; may exist in different oligomerization states in cells. Homotrimer, oligomerizes via TPR repeats 6 and 7. Trimerization is not necessary for activity in vitro, however it increases affinity for UDP-GlcNAc. Component of a THAP1/THAP3-HCFC1-OGT complex. Component of the NSL complex at least composed of MOF/KAT8, KANSL1, KANSL2, KANSL3, MCRS1, PHF20, OGT1/OGT, WDR5 and HCFC1. Found in a complex with KIF5B, RHOT1, RHOT2 and TRAK1. Found in a complex composed of at least SINHCAF, SIN3A, HDAC1, SAP30, RBBP4, OGT and TET1. Component of a complex composed of KMT2E/MLL5, OGT and USP7; the complex stabilizes KMT2E/MLL5, preventing KMT2E/MLL5 ubiquitination and proteasomal-mediated degradation. Interacts (via TPRs 1-6) with SIN3A; the interaction mediates transcriptional repression in parallel with histone deacetylase. Interacts (via TPR 5-6) with TET1, TET2 and TET3. Interacts (via TPR repeats 6 and 7) with ATXN10. Interacts with NSD2. Interacts with PROSER1; this interaction mediates TET2 O-GlcNAcylation and stability by promoting the interaction between OGT and TET2. In terms of processing, ubiquitinated by the SCF(FBXO31) complex, leading to its proteasomal degradation. Post-translationally, phosphorylation on Ser-3 or Ser-4 by GSK3-beta positively regulates its activity. Phosphorylation at Thr-454 by AMPK promotes nuclear localization. Glycosylated via autocatalysis; O-GlcNAcylation at Ser-399 promotes nuclear localization.

It localises to the cytoplasm. It is found in the nucleus. The protein localises to the cell membrane. The protein resides in the mitochondrion membrane. Its subcellular location is the cell projection. It carries out the reaction L-seryl-[protein] + UDP-N-acetyl-alpha-D-glucosamine = 3-O-(N-acetyl-beta-D-glucosaminyl)-L-seryl-[protein] + UDP + H(+). The enzyme catalyses L-threonyl-[protein] + UDP-N-acetyl-alpha-D-glucosamine = 3-O-(N-acetyl-beta-D-glucosaminyl)-L-threonyl-[protein] + UDP + H(+). It functions in the pathway protein modification; protein glycosylation. Its activity is regulated as follows. Subject to product inhibition by UDP. Its function is as follows. Catalyzes the transfer of a single N-acetylglucosamine from UDP-GlcNAc to a serine or threonine residue in cytoplasmic and nuclear proteins resulting in their modification with a beta-linked N-acetylglucosamine (O-GlcNAc). Glycosylates a large and diverse number of proteins including histone H2B, AKT1, AMPK, ATG4B, CAPRIN1, EZH2, FNIP1, GSDMD, KRT7, LMNA, LMNB1, LMNB2, RPTOR, HOXA1, PFKL, KMT2E/MLL5, MAPT/TAU, TET2, RBL2, RET, NOD2 and HCFC1. Can regulate their cellular processes via cross-talk between glycosylation and phosphorylation or by affecting proteolytic processing. Involved in insulin resistance in muscle and adipocyte cells via glycosylating insulin signaling components and inhibiting the 'Thr-308' phosphorylation of AKT1, enhancing IRS1 phosphorylation and attenuating insulin signaling. Involved in glycolysis regulation by mediating glycosylation of 6-phosphofructokinase PFKL, inhibiting its activity. Plays a key role in chromatin structure by mediating O-GlcNAcylation of 'Ser-112' of histone H2B: recruited to CpG-rich transcription start sites of active genes via its interaction with TET proteins (TET1, TET2 or TET3). As part of the NSL complex indirectly involved in acetylation of nucleosomal histone H4 on several lysine residues. O-GlcNAcylation of 'Ser-75' of EZH2 increases its stability, and facilitating the formation of H3K27me3 by the PRC2/EED-EZH2 complex. Stabilizes KMT2E/MLL5 by mediating its glycosylation, thereby preventing KMT2E/MLL5 ubiquitination. Regulates circadian oscillation of the clock genes and glucose homeostasis in the liver. Stabilizes clock proteins BMAL1 and CLOCK through O-glycosylation, which prevents their ubiquitination and subsequent degradation. Promotes the CLOCK-BMAL1-mediated transcription of genes in the negative loop of the circadian clock such as PER1/2 and CRY1/2. O-glycosylates HCFC1 and regulates its proteolytic processing and transcriptional activity. Component of a THAP1/THAP3-HCFC1-OGT complex that is required for the regulation of the transcriptional activity of RRM1. Regulates mitochondrial motility in neurons by mediating glycosylation of TRAK1. Promotes autophagy by mediating O-glycosylation of ATG4B. Acts as a regulator of mTORC1 signaling by mediating O-glycosylation of RPTOR and FNIP1: O-GlcNAcylation of RPTOR in response to glucose sufficiency promotes activation of the mTORC1 complex. The polypeptide is UDP-N-acetylglucosamine--peptide N-acetylglucosaminyltransferase 110 kDa subunit (Ogt) (Mus musculus (Mouse)).